We begin with the raw amino-acid sequence, 803 residues long: Zinc finger X-linked protein ZXDB (803 aa).

Disordered regions lie at residues 1–91, 120–140, and 218–260; these read MEIP…GGDD, EAEE…AGPT, and AAHP…GPRG. Gly residues predominate over residues 13 to 26; the sequence is LQGGGGGGIPAGGG. C2H2-type zinc fingers lie at residues 271 to 295, 304 to 328, 334 to 358, 364 to 386, 393 to 417, 424 to 448, 454 to 478, 484 to 508, 514 to 538, and 547 to 572; these read YLCP…LLTH, FKCP…LQSH, FGCP…MKGH, FKCE…QRSH, YQCA…NRAH, FSCS…LRSH, FLCD…KRKH, FMCP…SITH, FVCP…SKKH, and SRCP…VKRH. A required for interaction with ZXDC region spans residues 271-577; that stretch reads YLCPEAQCGQ…MVKRHKVGQD (307 aa). Positions 576-703 are required for transcriptional activation; sequence QDLLAQLEAA…NMDEVSSVSV (128 aa).

The protein belongs to the ZXD family. In terms of assembly, self-associates. Interacts with ZXDC and CIITA. May be expressed in brain, heart, kidney, liver, lung, muscle and placenta.

Its subcellular location is the nucleus. Cooperates with CIITA to promote transcription of MHC class I and MHC class II genes. In Homo sapiens (Human), this protein is Zinc finger X-linked protein ZXDB (ZXDB).